We begin with the raw amino-acid sequence, 316 residues long: Transmembrane protein 231 (316 aa).

The chain crosses the membrane as a helical span at residues 23–43 (AALFLLLAAALTYIPPLLVAF). N-linked (GlcNAc...) asparagine glycans are attached at residues asparagine 194, asparagine 199, and asparagine 221. A helical membrane pass occupies residues 262-282 (FWEMVKFAWVQYVSILLIFLW).

It belongs to the TMEM231 family. As to quaternary structure, part of the tectonic-like complex (also named B9 complex). Interacts with TMEM107.

It is found in the cell projection. The protein localises to the cilium membrane. Transmembrane component of the tectonic-like complex, a complex localized at the transition zone of primary cilia and acting as a barrier that prevents diffusion of transmembrane proteins between the cilia and plasma membranes. Required for ciliogenesis and sonic hedgehog/SHH signaling. The sequence is that of Transmembrane protein 231 (TMEM231) from Homo sapiens (Human).